The sequence spans 371 residues: Putative glutamate--cysteine ligase 2 (371 aa).

The protein belongs to the glutamate--cysteine ligase type 2 family. YbdK subfamily.

It carries out the reaction L-cysteine + L-glutamate + ATP = gamma-L-glutamyl-L-cysteine + ADP + phosphate + H(+). Functionally, ATP-dependent carboxylate-amine ligase which exhibits weak glutamate--cysteine ligase activity. In Cupriavidus necator (strain ATCC 17699 / DSM 428 / KCTC 22496 / NCIMB 10442 / H16 / Stanier 337) (Ralstonia eutropha), this protein is Putative glutamate--cysteine ligase 2.